Consider the following 419-residue polypeptide: tRNA(Ile)-lysidine synthase (419 aa).

ATP is bound at residue Ser31–Ser36.

This sequence belongs to the tRNA(Ile)-lysidine synthase family.

It localises to the cytoplasm. It catalyses the reaction cytidine(34) in tRNA(Ile2) + L-lysine + ATP = lysidine(34) in tRNA(Ile2) + AMP + diphosphate + H(+). In terms of biological role, ligates lysine onto the cytidine present at position 34 of the AUA codon-specific tRNA(Ile) that contains the anticodon CAU, in an ATP-dependent manner. Cytidine is converted to lysidine, thus changing the amino acid specificity of the tRNA from methionine to isoleucine. This chain is tRNA(Ile)-lysidine synthase, found in Ruegeria pomeroyi (strain ATCC 700808 / DSM 15171 / DSS-3) (Silicibacter pomeroyi).